Reading from the N-terminus, the 346-residue chain is uncharacterized protein (346 aa).

This is an uncharacterized protein from Borreliella burgdorferi (strain ATCC 35210 / DSM 4680 / CIP 102532 / B31) (Borrelia burgdorferi).